Reading from the N-terminus, the 474-residue chain is tRNA-2-methylthio-N(6)-dimethylallyladenosine synthase (474 aa).

The region spanning 3–120 is the MTTase N-terminal domain; that stretch reads KKLHIKTWGC…LPEMINHVQG (118 aa). Cys-12, Cys-49, Cys-83, Cys-157, Cys-161, and Cys-164 together coordinate [4Fe-4S] cluster. The Radical SAM core domain maps to 143 to 375; the sequence is RAEGPTAFVS…QQRISQQAME (233 aa). The TRAM domain occupies 378–441; sequence RKMVGTVQRV…ASSLRGILLR (64 aa).

It belongs to the methylthiotransferase family. MiaB subfamily. Monomer. [4Fe-4S] cluster serves as cofactor.

The protein localises to the cytoplasm. The enzyme catalyses N(6)-dimethylallyladenosine(37) in tRNA + (sulfur carrier)-SH + AH2 + 2 S-adenosyl-L-methionine = 2-methylsulfanyl-N(6)-dimethylallyladenosine(37) in tRNA + (sulfur carrier)-H + 5'-deoxyadenosine + L-methionine + A + S-adenosyl-L-homocysteine + 2 H(+). Its function is as follows. Catalyzes the methylthiolation of N6-(dimethylallyl)adenosine (i(6)A), leading to the formation of 2-methylthio-N6-(dimethylallyl)adenosine (ms(2)i(6)A) at position 37 in tRNAs that read codons beginning with uridine. The sequence is that of tRNA-2-methylthio-N(6)-dimethylallyladenosine synthase from Yersinia pestis bv. Antiqua (strain Angola).